The following is a 189-amino-acid chain: GMP synthase [glutamine-hydrolyzing] subunit A (189 aa).

Residues 3 to 187 (RIDVIDNHGQ…LSVCDQQSVA (185 aa)) form the Glutamine amidotransferase type-1 domain. C73 functions as the Nucleophile in the catalytic mechanism. Residues H161 and E163 contribute to the active site.

As to quaternary structure, heterodimer composed of a glutamine amidotransferase subunit (A) and a GMP-binding subunit (B).

The catalysed reaction is XMP + L-glutamine + ATP + H2O = GMP + L-glutamate + AMP + diphosphate + 2 H(+). The protein operates within purine metabolism; GMP biosynthesis; GMP from XMP (L-Gln route): step 1/1. In terms of biological role, catalyzes the synthesis of GMP from XMP. The polypeptide is GMP synthase [glutamine-hydrolyzing] subunit A (Haloarcula marismortui (strain ATCC 43049 / DSM 3752 / JCM 8966 / VKM B-1809) (Halobacterium marismortui)).